The following is a 414-amino-acid chain: Probable aminotransferase TAT2 (414 aa).

The protein belongs to the class-I pyridoxal-phosphate-dependent aminotransferase family. The cofactor is pyridoxal 5'-phosphate.

This chain is Probable aminotransferase TAT2, found in Arabidopsis thaliana (Mouse-ear cress).